The following is a 792-amino-acid chain: MDTRVELELEPVGKQDRLKDQPDDENEPLENQLELEQEHKSLLTPVKIPPAQTASPDQEATPSTPPPMSLQPGTSRQLFRDAAMAHGGQETTSLLQQELNNIAATQTPASKLRSASSTLDASISRNPSTTGGKHEKKLGHRRVAEGGEVTYKKIQSKQIMGSIQLGIQHTVGSLASKPKRDLLMNDFWEMETISFPPDGSSITPAHHYNDFRFKVYAPIAFRYFRDLFGIAPDDFLMSMCASPLRELSNPGASGSIFYLTTDDEFIIKTVQKKECEFLQKLLPGYYMNLSQNPRTLLPKFFGLYCFHYNSKNVRLVAMNNLLPSDIKMHCKYDLKGSSFRRKASKAERQKASPTFKDLDFAEHHPNGIFLETDKYNALMSTIKRDCMVLESFQIMDYSLLVGIHNLDLAAKEKREERILNARAKLQRKESAAQGPPSLNPDDDAPEADQNQLQAVASYASIPGTSAGAALNRTRSMNRQRLVAHSTALESITADMDVPLEEDEDVPAGGIPARSENDERLILYIGIIDILQSYRLEKKLEHTFKSILYNGDTVSVCRPSFYAKRFQDAMGKQVFKKTPTFPLKHSPSKRKTSTTQLRSPASRLPPLSTPTNAVRQPIMTMSGMSTPPPAFDDISEEDITAASTSSLQQQRSSNQSNNNRGETEVALREGNNTRGGSGEPSSTYHTQYSYDSSGRTGSALTSDYSDDESTGTDLSSRLPKLRTHRLTKTSVQVTTVGYVEGVDTPPKGGQDVVHADVNGKTTMTTTTMLTTTKTAHIQAPSYTSTLVLNDLPR.

Residues 1–21 (MDTRVELELEPVGKQDRLKDQ) are compositionally biased toward basic and acidic residues. 5 disordered regions span residues 1-74 (MDTR…QPGT), 105-139 (TQTPASKLRSASSTLDASISRNPSTTGGKHEKKLG), 423-446 (AKLQRKESAAQGPPSLNPDDDAPE), 577-612 (TPTFPLKHSPSKRKTSTTQLRSPASRLPPLSTPTNA), and 640-714 (AAST…TDLS). 2 stretches are compositionally biased toward polar residues: residues 52-62 (QTASPDQEATP) and 105-131 (TQTPASKLRSASSTLDASISRNPSTTG). In terms of domain architecture, PIPK spans 155–573 (QSKQIMGSIQ…RFQDAMGKQV (419 aa)). Over residues 642–658 (STSSLQQQRSSNQSNNN) the composition is skewed to low complexity. Residues 678–702 (EPSSTYHTQYSYDSSGRTGSALTSD) are compositionally biased toward polar residues.

Interacts with ash2 (via B30.2/SPRY domain); the interaction is direct and seems to be specific for ash2 isoform B.

It is found in the cytoplasm. The protein localises to the cell cortex. It localises to the nucleus. Its subcellular location is the chromosome. The protein resides in the apical cell membrane. It is found in the cell projection. The protein localises to the cilium. It localises to the flagellum membrane. The enzyme catalyses a 1,2-diacyl-sn-glycero-3-phospho-(1D-myo-inositol 4-phosphate) + ATP = a 1,2-diacyl-sn-glycero-3-phospho-(1D-myo-inositol-4,5-bisphosphate) + ADP + H(+). Functionally, catalyzes the phosphorylation of phosphatidylinositol 4-phosphate (PtdIns[4]P) to form phosphatidylinositol 4,5-bisphosphate (PtdIns[4,5]P(2)), a lipid second messenger that regulates several cellular processes such as signal transduction, vesicle trafficking, actin cytoskeleton dynamics, cell adhesion, and cell motility. PtdIns[4,5]P(2) can directly act as a second messenger or can be utilized as a precursor to generate other second messengers: inositol 1,4,5-trisphosphate (IP3), diacylglycerol (DAG) or phosphatidylinositol-3,4,5-trisphosphate (PtdIns[3,4,5]P(3)). Required for germline development during oogenesis. Sktl is the major phosphatidylinositol 4-phosphate 5-kinase responsible for enrichment of PtdIns[4,5]P(2) in the apical plasma membrane of the oocyte and follicular epithelium cells of the egg chamber during oogenesis. Involved in nuclear anchoring and microtubule organization required for targeted mRNA transport during maintenance of oocyte polarity. The PtdIns[4,5]P(2) produced by sktl is required for maintenance of cellular polarity, prevention of the epithelial-mesenchymal transition process, maintenance of adherens junctions and regulation of apical constriction, probably by affecting polarized cortical recruitment of PAR proteins and their effectors, including baz/bazooka, aPKC, par-1 and l(2)gl. Involved in actin cytoskeleton organization probably through PtdIns[4,5]P(2)-mediated regulation of Moe/Moesin phosphorylation. Involved in PtdIns[4,5]P(2)-mediated apical recruitment of the formin dia/diaphanous in tubular epithelial cells. Involved in anterodorsal cell morphogenesis and eggshell dorsal appendage formation, probably through regulation of apical constriction by PtdIns[4,5]P(2) during tubulogenesis. Required for cell viability or proliferation during wing and eye imaginal disk development. May be involved in cytoskeletal regulation during sensory bristle development. Together with mys/integrin beta localizes to the trailing edge of larval epidermal cells in a JNK signaling-dependent manner during wound healing and is required for setting up cell polarity and re-epithelialization. Required for polarization of elongating spermatid cysts possibly by generation of PtdIns[4,5]P(2) involved in mediating membrane association and orientation of the nucleus-basal body pair. Probably involved in PtdIns[4,5]P(2)-mediated recruitment of exocyst proteins that may mediate membrane addition during spermatid elongation. Involved in maintenance of specialised cell contacts known as slit diaphragms required for nephrocyte morphogenesis and function. Regulates nephrocyte endocytosis, possibly through PtdIns[4,5]P(2)-mediated recruitment of effector proteins. Not required for nervous system development or neurotransmitter release at the neuromuscular junction. Together with ash2 probably plays a role in maintenance of transcriptionally active chromatin through down-regulation of histone H1 hyperphosphorylation. This Drosophila melanogaster (Fruit fly) protein is Phosphatidylinositol 4-phosphate 5-kinase type-1 sktl.